Consider the following 194-residue polypeptide: ATP-dependent Clp protease proteolytic subunit (194 aa).

Serine 98 (nucleophile) is an active-site residue. Histidine 123 is an active-site residue.

This sequence belongs to the peptidase S14 family. In terms of assembly, fourteen ClpP subunits assemble into 2 heptameric rings which stack back to back to give a disk-like structure with a central cavity, resembling the structure of eukaryotic proteasomes.

The protein localises to the cytoplasm. It carries out the reaction Hydrolysis of proteins to small peptides in the presence of ATP and magnesium. alpha-casein is the usual test substrate. In the absence of ATP, only oligopeptides shorter than five residues are hydrolyzed (such as succinyl-Leu-Tyr-|-NHMec, and Leu-Tyr-Leu-|-Tyr-Trp, in which cleavage of the -Tyr-|-Leu- and -Tyr-|-Trp bonds also occurs).. Its function is as follows. Cleaves peptides in various proteins in a process that requires ATP hydrolysis. Has a chymotrypsin-like activity. Plays a major role in the degradation of misfolded proteins. This is ATP-dependent Clp protease proteolytic subunit from Staphylococcus saprophyticus subsp. saprophyticus (strain ATCC 15305 / DSM 20229 / NCIMB 8711 / NCTC 7292 / S-41).